A 477-amino-acid polypeptide reads, in one-letter code: Trigger factor (477 aa).

The PPIase FKBP-type domain maps to 174-261; it reads GDIAVVSFKG…LKDLKEKELP (88 aa). The tract at residues 435–477 is disordered; it reads VNEKTTKTSKATKTSKTTKATKTATKTTKTTKTTKTQNKKEKK. The span at 442–470 shows a compositional bias: low complexity; sequence TSKATKTSKTTKATKTATKTTKTTKTTKT.

The protein belongs to the FKBP-type PPIase family. Tig subfamily.

The protein localises to the cytoplasm. It catalyses the reaction [protein]-peptidylproline (omega=180) = [protein]-peptidylproline (omega=0). Involved in protein export. Acts as a chaperone by maintaining the newly synthesized protein in an open conformation. Functions as a peptidyl-prolyl cis-trans isomerase. This chain is Trigger factor, found in Prochlorococcus marinus (strain MIT 9301).